We begin with the raw amino-acid sequence, 231 residues long: Ferritin light chain (231 aa).

An N-terminal signal peptide occupies residues 1-19; that stretch reads MKMLILAVSCLLAITGSLA. Cys23 and Cys43 are disulfide-bonded. The Ferritin-like diiron domain maps to 50 to 208; it reads YGSHGNVATE…GHTSDLKKFI (159 aa). Asn134 carries N-linked (GlcNAc...) asparagine glycosylation.

Belongs to the ferritin family. As to quaternary structure, oligomer of 12 light (L) chains and 12 heavy (H) chains; L and H chains are disulfide-linked. The functional molecule forms a roughly spherical shell with a diameter of 12 nm and contains a central cavity into which the insoluble ferric iron core is deposited.

It is found in the golgi apparatus. The protein localises to the secreted. Functionally, stores iron in a soluble, non-toxic, readily available form. Important for iron homeostasis. Iron is taken up in the ferrous form and deposited as ferric hydroxides after oxidation. Ferritin is composed of a heavy (H) chain which is responsible for the oxidation and uptake of ferrous iron, and a light (L) chain which facilitates the nucleation of the ferrihydrite iron core. The sequence is that of Ferritin light chain from Trichoplusia ni (Cabbage looper).